The sequence spans 287 residues: 4-diphosphocytidyl-2-C-methyl-D-erythritol kinase (287 aa).

The active site involves Lys-10. 94–104 (PVAAGLGGGSA) is a binding site for ATP. Asp-136 is an active-site residue.

It belongs to the GHMP kinase family. IspE subfamily.

It carries out the reaction 4-CDP-2-C-methyl-D-erythritol + ATP = 4-CDP-2-C-methyl-D-erythritol 2-phosphate + ADP + H(+). It participates in isoprenoid biosynthesis; isopentenyl diphosphate biosynthesis via DXP pathway; isopentenyl diphosphate from 1-deoxy-D-xylulose 5-phosphate: step 3/6. In terms of biological role, catalyzes the phosphorylation of the position 2 hydroxy group of 4-diphosphocytidyl-2C-methyl-D-erythritol. The sequence is that of 4-diphosphocytidyl-2-C-methyl-D-erythritol kinase from Pelotomaculum thermopropionicum (strain DSM 13744 / JCM 10971 / SI).